A 323-amino-acid chain; its full sequence is Cyclin-D5-1 (323 aa).

Disordered regions lie at residues 17-36 (ESSLNEDDDETIERSDKQEP) and 281-323 (HMTP…MRRL).

Belongs to the cyclin family. Cyclin D subfamily.

The sequence is that of Cyclin-D5-1 (CYCD5-1) from Arabidopsis thaliana (Mouse-ear cress).